The following is a 382-amino-acid chain: MAP kinase-activated protein kinase 3 (382 aa).

At Met-1 the chain carries N-acetylmethionine. The segment at 1–34 (MDGETAEEQGGPVPPPVAPGGPGLGGAPGGRREP) is disordered. The span at 20–29 (GGPGLGGAPG) shows a compositional bias: gly residues. One can recognise a Protein kinase domain in the interval 44 to 304 (QLSKQVLGLG…ITQFMNHPWI (261 aa)). ATP contacts are provided by residues 50–58 (LGLGVNGKV) and Lys-73. The active-site Proton acceptor is Asp-166. Thr-201 carries the phosphothreonine; by MAPK14 modification. Residue Ser-251 is modified to Phosphoserine; by MAPK14. Ser-307 carries the phosphoserine; by autocatalysis modification. The autoinhibitory helix stretch occupies residues 307–343 (SMVVPQTPLHTARVLQEDKDHWDEVKEEMTSALATMR). Residue Thr-313 is modified to Phosphothreonine; by MAPK14. Positions 335 to 344 (MTSALATMRV) match the Nuclear export signal (NES) motif. Positions 345 to 369 (DYDQVKIKDLKTSNNRLLNKRRKKQ) are p38 MAPK-binding site. 2 short sequence motifs (bipartite nuclear localization signal) span residues 350–353 (KIKD) and 364–368 (KRRKK). The segment at 357 to 382 (SNNRLLNKRRKKQAGSSSASQGCNNQ) is disordered. Residues 370–382 (AGSSSASQGCNNQ) are compositionally biased toward polar residues.

It belongs to the protein kinase superfamily. CAMK Ser/Thr protein kinase family. In terms of assembly, heterodimer with p38-alpha/MAPK14. The heterodimer with p38-alpha/MAPK14 forms a stable complex: molecules are positioned 'face to face' so that the ATP-binding sites of both kinases are at the heterodimer interface. Interacts with TCF3 and with polycomb proteins, such as PCH2 and BMI1/PCGF4. In terms of processing, phosphorylated and activated by MAPK1/ERK2 and MAPK3/ERK1. Phosphorylated and activated by MAP kinase p38-alpha/MAPK14 at Thr-201, Ser-251 and Thr-313. Widely expressed, with a higher expression level observed in heart and skeletal muscle. No expression in brain. Expressed in the retinal pigment epithelium.

It localises to the nucleus. It is found in the cytoplasm. It catalyses the reaction L-seryl-[protein] + ATP = O-phospho-L-seryl-[protein] + ADP + H(+). The catalysed reaction is L-threonyl-[protein] + ATP = O-phospho-L-threonyl-[protein] + ADP + H(+). With respect to regulation, activated following phosphorylation by p38-alpha/MAPK14 following various stresses. Inhibited by ligand 5B (2'-[2-(1,3-benzodioxol-5-yl)pyrimidin-4-yl]-5',6'-dihydrospiro[piperidine-4,7'-pyrrolo[3,2-c]pyridin]- 4'(1'h)-one) and ligand P4O (2-[2-(2-fluorophenyl)pyridin-4-yl]-1,5,6,7-tetrahydro- 4h-pyrrolo[3,2-c]pyridin-4-one), 2 ATP-competitive inhibitors. Stress-activated serine/threonine-protein kinase involved in cytokines production, endocytosis, cell migration, chromatin remodeling and transcriptional regulation. Following stress, it is phosphorylated and activated by MAP kinase p38-alpha/MAPK14, leading to phosphorylation of substrates. Phosphorylates serine in the peptide sequence, Hyd-X-R-X(2)-S, where Hyd is a large hydrophobic residue. MAPKAPK2 and MAPKAPK3, share the same function and substrate specificity, but MAPKAPK3 kinase activity and level in protein expression are lower compared to MAPKAPK2. Phosphorylates HSP27/HSPB1, KRT18, KRT20, RCSD1, RPS6KA3, TAB3 and TTP/ZFP36. Mediates phosphorylation of HSP27/HSPB1 in response to stress, leading to dissociate HSP27/HSPB1 from large small heat-shock protein (sHsps) oligomers and impair their chaperone activities and ability to protect against oxidative stress effectively. Involved in inflammatory response by regulating tumor necrosis factor (TNF) and IL6 production post-transcriptionally: acts by phosphorylating AU-rich elements (AREs)-binding proteins, such as TTP/ZFP36, leading to regulate the stability and translation of TNF and IL6 mRNAs. Phosphorylation of TTP/ZFP36, a major post-transcriptional regulator of TNF, promotes its binding to 14-3-3 proteins and reduces its ARE mRNA affinity leading to inhibition of dependent degradation of ARE-containing transcript. Involved in toll-like receptor signaling pathway (TLR) in dendritic cells: required for acute TLR-induced macropinocytosis by phosphorylating and activating RPS6KA3. Also acts as a modulator of Polycomb-mediated repression. This Homo sapiens (Human) protein is MAP kinase-activated protein kinase 3 (MAPKAPK3).